Consider the following 135-residue polypeptide: Small ribosomal subunit protein uS9 (135 aa).

The tract at residues 96–135 (SADNRKPLKTEGHLSRDPRAKERRKYGLKKARKAPQFSKR) is disordered. The span at 97 to 115 (ADNRKPLKTEGHLSRDPRA) shows a compositional bias: basic and acidic residues. Residues 116–135 (KERRKYGLKKARKAPQFSKR) are compositionally biased toward basic residues.

The protein belongs to the universal ribosomal protein uS9 family.

This is Small ribosomal subunit protein uS9 from Prochlorococcus marinus (strain MIT 9303).